Here is a 669-residue protein sequence, read N- to C-terminus: Diacylglycerol lipase-beta (669 aa).

Over methionine 1–aspartate 17 the chain is Cytoplasmic. The helical transmembrane segment at leucine 18–threonine 38 threads the bilayer. Residues leucine 39–tyrosine 58 lie on the Extracellular side of the membrane. Residues leucine 59–valine 79 form a helical membrane-spanning segment. Over serine 80 to leucine 102 the chain is Cytoplasmic. A helical transmembrane segment spans residues alanine 103–isoleucine 123. Over glutamine 124 to threonine 128 the chain is Extracellular. The helical transmembrane segment at valine 129 to valine 149 threads the bilayer. Residues threonine 150 to proline 669 are Cytoplasmic-facing. Catalysis depends on charge relay system residues serine 443 and aspartate 495. Serine 570, serine 578, and serine 582 each carry phosphoserine.

The protein belongs to the AB hydrolase superfamily. Lipase family. It depends on Ca(2+) as a cofactor. Expressed in liver and immune cells such as macrophages and microglias. In embryonic brains present in axonal tracts, while in adults localizes to dendritic fields, correlating with the developmental change in requirement for 2-AG synthesis from the pre- to the postsynaptic compartment (at protein level).

It localises to the cell membrane. The enzyme catalyses a 1,2-diacyl-sn-glycerol + H2O = a 2-acylglycerol + a fatty acid + H(+). It catalyses the reaction 1-octadecanoyl-2-(5Z,8Z,11Z,14Z-eicosatetraenoyl)-sn-glycerol + H2O = 2-(5Z,8Z,11Z,14Z-eicosatetraenoyl)-glycerol + octadecanoate + H(+). It carries out the reaction 1,2-di-(9Z-octadecenoyl)-sn-glycerol + H2O = 2-(9Z-octadecenoyl)-glycerol + (9Z)-octadecenoate + H(+). The catalysed reaction is 1-(9Z-octadecenoyl)-2-(5Z,8Z,11Z,14Z-eicosatetraenoyl)-sn-glycerol + H2O = 2-(5Z,8Z,11Z,14Z-eicosatetraenoyl)-glycerol + (9Z)-octadecenoate + H(+). The enzyme catalyses 1-(9Z-octadecenoyl)-2-octadecanoyl-sn-glycerol + H2O = 2-octadecanoylglycerol + (9Z)-octadecenoate + H(+). It catalyses the reaction 1-(9Z-octadecenoyl)-2-(9Z,12Z-octadecadienoyl)-sn-glycerol + H2O = 2-(9Z,12Z-octadecadienoyl)-glycerol + (9Z)-octadecenoate + H(+). It carries out the reaction 1-(9Z-octadecenoyl)-2-O-(5Z,8Z,11Z,14Z-eicosatetraenyl)-sn-glycerol + H2O = 2-O-(5Z,8Z,11Z,14Z)-eicosatetraenylglycerol + (9Z)-octadecenoate + H(+). The catalysed reaction is a triacylglycerol + H2O = a diacylglycerol + a fatty acid + H(+). The enzyme catalyses 1,2,3-tri-(5Z,8Z,11Z,14Z-eicosatetraenoyl)-glycerol + H2O = 1,2-di-(5Z,8Z,11Z,14Z-eicosatetraenoyl)-glycerol + (5Z,8Z,11Z,14Z)-eicosatetraenoate + H(+). It catalyses the reaction 1,2,3-(4Z,7Z,10Z,13Z,16Z,19Z-docosahexaenoyl)-glycerol + H2O = 1,2-di-(4Z,7Z,10Z,13Z,16Z,19Z-docosahexaenoyl)-glycerol + (4Z,7Z,10Z,13Z,16Z,19Z)-docosahexaenoate + H(+). Inhibited by the 1,2,3-triazole urea covalent inhibitors KT109 and KT172. Inhibited by p-hydroxy-mercuri-benzoate and HgCl(2), but not by PMSF. Also inhibited by RHC80267, a drug that blocks 2-AG formation. Functionally, lipase that catalyzes the hydrolysis of arachidonic acid (AA)-esterified diacylglycerols (DAGs) to produce the principal endocannabinoid, 2-arachidonoylglycerol (2-AG) which can be further cleaved by downstream enzymes to release arachidonic acid (AA) for cyclooxygenase (COX)-mediated eicosanoid production. Preferentially hydrolyzes DAGs at the sn-1 position in a calcium-dependent manner and has negligible activity against other lipids including monoacylglycerols and phospholipids. Plays a key role in the regulation of 2-AG and AA pools utilized by COX1/2 to generate lipid mediators of macrophage and microglia inflammatory responses. Also functions as a polyunsaturated fatty acids-specific triacylglycerol lipase in macrophages. Plays an important role to support the metabolic and signaling demands of macrophages. The polypeptide is Diacylglycerol lipase-beta (Daglb) (Mus musculus (Mouse)).